Consider the following 262-residue polypeptide: uncharacterized protein (262 aa).

The ABC transporter domain maps to 5–223; sequence IKVENLTKYF…MAYIEYLDNG (219 aa). 37–44 contributes to the ATP binding site; that stretch reads GHNGAGKT.

Belongs to the ABC transporter superfamily.

This is an uncharacterized protein from Methanocaldococcus jannaschii (strain ATCC 43067 / DSM 2661 / JAL-1 / JCM 10045 / NBRC 100440) (Methanococcus jannaschii).